The sequence spans 1012 residues: MSVDYANYTVLMPPTPDNQPSGGAPPAAPSAGGARPGDLPLPPYGSSSSSRLVNRRGGGDDGAKMDRRLSTARVPAPSSNKSLLVRSQTGDFDHNRWLFETKGTYGIGNAYWPQDNVYGDDGGGGAVKMEDLVEKPWKPLSRKVPIPPGILSPYRLLVLVRFVALFLFLVWRVTNPNMDALWLWGISIVCEFWFAFSWLLDQMPKLNPINRAADLAALKEKFESPSPTNPTGRSDLPGLDVFISTADPYKEPTLVTANTLLSILATEYPVEKLFVYISDDGGALLTFESMAEACAFAKVWVPFCRKHSIEPRNPDSYFTQKGDPTKGKKRPDFVKDRRWIKREYDEFKIRVNSLPDLIRRRANALNARERKLARDKQAAGDADALASVKAATWMADGTHWPGTWLDPSPDHAKGDHASIVQVMIKNPHHDVVYGEAGDHPYLDMTDVDMRIPMFAYLSREKRAGYDHNKKAGAMNAMVRASAILSNGPFMLNFDCDHYIYNCQAIREAMCYMLDRGGDRICYIQFPQRFEGIDPSDRYANHNTVFFDGNMRALDGLQGPMYVGTGCLFRRYAIYGFNPPRAIEYRGTYGQTKVPIDPRQGSEAMPGAGGGRSGGGSVGGDHELQALSTAHPDHEAPQKFGKSKMFIESIAVAEYQGRPLQDHPSVLNGRPPGALLMPRPPLDAATVAESVSVISCWYEDNTEWGQRVGWIYGSVTEDVVTGYRMHNRGWRSVYCITRRDAFRGTAPINLTDRLHQVLRWATGSVEIFFSKNNAVLASRRLKFLQRMAYLNVGIYPFTSLFLIMYCLLPALSLFSGQFIVATLDPTFLSYLLLITITLMLLCLLEVKWSGIGLEEWWRNEQFWVIGGTSAHLAAVLQGLLKVVAGIEISFTLTAKAAAEDDDDPFAELYLIKWTSLFIPPLAVIGINIIALVVGVSRTVYAEIPQYSKLLGGGFFSFWVLAHYYPFAKGLMGRRGRTPTIVYVWAGLISITVSLLWITISPPDDSVAQGGIDV.

The tract at residues 1 to 81 is disordered; it reads MSVDYANYTV…ARVPAPSSNK (81 aa). Residues 20–37 are compositionally biased toward low complexity; sequence PSGGAPPAAPSAGGARPG. The span at 57–69 shows a compositional bias: basic and acidic residues; it reads GGGDDGAKMDRRL. Helical transmembrane passes span 150–170 and 180–200; these read ILSPYRLLVLVRFVALFLFLV and ALWLWGISIVCEFWFAFSWLL. D280 is an active-site residue. Residues 597–620 form a disordered region; that stretch reads PRQGSEAMPGAGGGRSGGGSVGGD. Residues 606–618 show a composition bias toward gly residues; that stretch reads GAGGGRSGGGSVG. Residue D717 is part of the active site. Helical transmembrane passes span 799 to 819, 825 to 845, 871 to 891, 914 to 934, 948 to 968, and 978 to 998; these read LFLIMYCLLPALSLFSGQFIV, TFLSYLLLITITLMLLCLLEV, LAAVLQGLLKVVAGIEISFTL, SLFIPPLAVIGINIIALVVGV, LLGGGFFSFWVLAHYYPFAKG, and TIVYVWAGLISITVSLLWITI.

Belongs to the glycosyltransferase 2 family. Plant cellulose synthase-like D subfamily.

The protein localises to the golgi apparatus membrane. In terms of biological role, thought to be a Golgi-localized beta-glycan synthase that polymerize the backbones of noncellulosic polysaccharides (hemicelluloses) of plant cell wall. The protein is Cellulose synthase-like protein D5 (CSLD5) of Oryza sativa subsp. japonica (Rice).